The primary structure comprises 218 residues: Peptide methionine sulfoxide reductase MsrA (218 aa).

The active site involves Cys-57.

This sequence belongs to the MsrA Met sulfoxide reductase family.

It carries out the reaction L-methionyl-[protein] + [thioredoxin]-disulfide + H2O = L-methionyl-(S)-S-oxide-[protein] + [thioredoxin]-dithiol. The catalysed reaction is [thioredoxin]-disulfide + L-methionine + H2O = L-methionine (S)-S-oxide + [thioredoxin]-dithiol. Has an important function as a repair enzyme for proteins that have been inactivated by oxidation. Catalyzes the reversible oxidation-reduction of methionine sulfoxide in proteins to methionine. The sequence is that of Peptide methionine sulfoxide reductase MsrA from Brucella suis biovar 1 (strain 1330).